Here is a 611-residue protein sequence, read N- to C-terminus: MIFFKKKHDKKLLLGIDLGTTYSLAATVREKSVILLLDKKKRYLLPSVVHYKKNKISVGWKALENITEDPTNTISSVKRLLGRSINFVKKKFPILPYLIEKDIHEGIFFRTNFGNITPIDVSSHILKKLKKRAVLLFNQEIDASVITVPAYFNDFQKKETKKAAVLSGINLIRLLNEPTAAAVAYGLQKLKKGIVLVYDLGGGTFDVSILNLNKGIFEVLATSGDSNLGGDDFDDALAKNIYKKSNLQNRCNDFFQTSLLQIAKSTKLKLTKYEKVEVHFFDWKGYITREEFNLIIIDFIKKTLFICSDLLEEINLSVEQIKEVIMVGGSTRIPLVHTEVSKFFKKDLLKSINPDQVVAIGAAMHVDMLFSSKNNTKNKVILLDVMPLSLGIEVMGGFVEKIIFRNTSLPISKTKEFTTYKDNQTSILIHIVQGERELVKDCISLSRFVLRDIKPQKAGLVRILVTFQVDTDGLIHVKILENYSSKEKKIIIDNNITLKNLNISQILKDSLKHSKDDYYFRVKEEKKIECVRTLEILNKSLKKHLKLISKKELKKIKYTQEKLQKSIQEDDYFSMKNNLQKLDEVSKNFFSLQLKNAIDCSSIKNILKENI.

This sequence belongs to the heat shock protein 70 family.

Its function is as follows. Chaperone involved in the maturation of iron-sulfur cluster-containing proteins. Has a low intrinsic ATPase activity which is markedly stimulated by HscB. Involved in the maturation of IscU. In Buchnera aphidicola subsp. Acyrthosiphon pisum (strain 5A), this protein is Chaperone protein HscA.